The following is a 388-amino-acid chain: D-xylose dehydrogenase (388 aa).

Belongs to the Gfo/Idh/MocA family. Homotetramer. It depends on Zn(2+) as a cofactor.

It carries out the reaction D-xylose + NADP(+) = D-xylono-1,5-lactone + NADPH + H(+). The catalysed reaction is D-xylose + NAD(+) = D-xylono-1,5-lactone + NADH + H(+). The protein operates within carbohydrate metabolism; D-xylose degradation. Its function is as follows. Catalyzes the NADP(+)-dependent oxidation of D-xylose. Is able to use both NADP(+) and NAD(+); however, the enzyme shows a very strong preference for NADP(+). Is likely involved in the first step of the oxidative D-xylose degradation pathway. This is D-xylose dehydrogenase (xdh) from Paenarthrobacter nicotinovorans (Arthrobacter nicotinovorans).